Consider the following 89-residue polypeptide: RNA-binding protein Hfq (89 aa).

The Sm domain occupies 9–68 (EPFLNALRKEKVPVSIYLVNGIKLQGQIESFDQFVILLRNNVNQMVYKHAISTVVPARNV). The segment at 70–89 (TAPPVPTETHAQSSEEFGNI) is disordered. Positions 78 to 89 (THAQSSEEFGNI) are enriched in polar residues.

It belongs to the Hfq family. In terms of assembly, homohexamer.

Its function is as follows. RNA chaperone that binds small regulatory RNA (sRNAs) and mRNAs to facilitate mRNA translational regulation in response to envelope stress, environmental stress and changes in metabolite concentrations. Also binds with high specificity to tRNAs. In Alkalilimnicola ehrlichii (strain ATCC BAA-1101 / DSM 17681 / MLHE-1), this protein is RNA-binding protein Hfq.